The chain runs to 593 residues: Probable serine/threonine-protein kinase fhkA (593 aa).

The segment at M1–P24 is disordered. The region spanning I54 to I111 is the FHA domain. The region spanning Y180 to I472 is the Protein kinase domain. ATP is bound by residues L186–V194 and K209. D307 functions as the Proton acceptor in the catalytic mechanism.

It belongs to the protein kinase superfamily. CAMK Ser/Thr protein kinase family. CHK2 subfamily.

The catalysed reaction is L-seryl-[protein] + ATP = O-phospho-L-seryl-[protein] + ADP + H(+). It carries out the reaction L-threonyl-[protein] + ATP = O-phospho-L-threonyl-[protein] + ADP + H(+). In Dictyostelium discoideum (Social amoeba), this protein is Probable serine/threonine-protein kinase fhkA (fhkA).